A 213-amino-acid chain; its full sequence is Probable septum site-determining protein MinC (213 aa).

This sequence belongs to the MinC family. Interacts with MinD and FtsZ.

Its function is as follows. Cell division inhibitor that blocks the formation of polar Z ring septums. Rapidly oscillates between the poles of the cell to destabilize FtsZ filaments that have formed before they mature into polar Z rings. Prevents FtsZ polymerization. This is Probable septum site-determining protein MinC from Clostridium botulinum (strain Eklund 17B / Type B).